We begin with the raw amino-acid sequence, 286 residues long: Ribose-phosphate pyrophosphokinase (286 aa).

Residues 34–36 and 91–92 each bind ATP; these read DGE and RQ. Mg(2+) is bound by residues H124 and D161. Residue K184 is part of the active site. Residues R186, D210, and 214 to 218 contribute to the D-ribose 5-phosphate site; that span reads STGGT.

Belongs to the ribose-phosphate pyrophosphokinase family. Class III (archaeal) subfamily. Mg(2+) is required as a cofactor.

It localises to the cytoplasm. The enzyme catalyses D-ribose 5-phosphate + ATP = 5-phospho-alpha-D-ribose 1-diphosphate + AMP + H(+). Its pathway is metabolic intermediate biosynthesis; 5-phospho-alpha-D-ribose 1-diphosphate biosynthesis; 5-phospho-alpha-D-ribose 1-diphosphate from D-ribose 5-phosphate (route I): step 1/1. Its function is as follows. Involved in the biosynthesis of the central metabolite phospho-alpha-D-ribosyl-1-pyrophosphate (PRPP) via the transfer of pyrophosphoryl group from ATP to 1-hydroxyl of ribose-5-phosphate (Rib-5-P). The chain is Ribose-phosphate pyrophosphokinase from Thermoplasma acidophilum (strain ATCC 25905 / DSM 1728 / JCM 9062 / NBRC 15155 / AMRC-C165).